A 507-amino-acid chain; its full sequence is Probable malate:quinone oxidoreductase 2 (507 aa).

The protein belongs to the MQO family. It depends on FAD as a cofactor.

It catalyses the reaction (S)-malate + a quinone = a quinol + oxaloacetate. It participates in carbohydrate metabolism; tricarboxylic acid cycle; oxaloacetate from (S)-malate (quinone route): step 1/1. The protein is Probable malate:quinone oxidoreductase 2 of Pseudomonas aeruginosa (strain ATCC 15692 / DSM 22644 / CIP 104116 / JCM 14847 / LMG 12228 / 1C / PRS 101 / PAO1).